A 488-amino-acid polypeptide reads, in one-letter code: UDP-glycosyltransferase 73B1 (488 aa).

UDP-alpha-D-glucose contacts are provided by residues T297, 356–358, 373–381, and 395–398; these read APQ, HCGWNSLLE, and GAEQ.

The protein belongs to the UDP-glycosyltransferase family.

Functionally, possesses low quercetin 3-O-glucosyltransferase and 7-O-glucosyltransferase activities in vitro. The sequence is that of UDP-glycosyltransferase 73B1 (UGT73B1) from Arabidopsis thaliana (Mouse-ear cress).